We begin with the raw amino-acid sequence, 303 residues long: UDP-3-O-acyl-N-acetylglucosamine deacetylase (303 aa).

His-78, His-237, and Asp-241 together coordinate Zn(2+). The active-site Proton donor is His-264.

Belongs to the LpxC family. The cofactor is Zn(2+).

It carries out the reaction a UDP-3-O-[(3R)-3-hydroxyacyl]-N-acetyl-alpha-D-glucosamine + H2O = a UDP-3-O-[(3R)-3-hydroxyacyl]-alpha-D-glucosamine + acetate. Its pathway is glycolipid biosynthesis; lipid IV(A) biosynthesis; lipid IV(A) from (3R)-3-hydroxytetradecanoyl-[acyl-carrier-protein] and UDP-N-acetyl-alpha-D-glucosamine: step 2/6. Catalyzes the hydrolysis of UDP-3-O-myristoyl-N-acetylglucosamine to form UDP-3-O-myristoylglucosamine and acetate, the committed step in lipid A biosynthesis. This is UDP-3-O-acyl-N-acetylglucosamine deacetylase from Azotobacter vinelandii (strain DJ / ATCC BAA-1303).